A 283-amino-acid polypeptide reads, in one-letter code: Circadian clock oscillator protein KaiA (283 aa).

The tract at residues 1–146 is psR domain, not required to form KaiA:KaiB:KaiC complex, or for a full KaiC phosphorylation cycle; sequence MAQSTALTIC…LFRLPALKES (146 aa). A KaiA N-terminal domain is found at 3 to 163; it reads QSTALTICGL…RLSQKLKERL (161 aa). The segment at 164 to 172 is flexible linker; sequence GYLGVYYKR. The KaiA C-terminal domain maps to 173–281; it reads DTAFFFRRMS…CEMYRRSIPR (109 aa).

It belongs to the KaiA family. Homodimer. The KaiABC complex composition changes during the circadian cycle to control KaiC phosphorylation. Complexes KaiC(6), KaiA(2-4):KaiC(6), KaiB(6):KaiC(6) and KaiC(6):KaiB(6):KaiA(12) are among the most important forms, many form cooperatively. Binds to KaiB and KaiC, the N-terminus (pseudoreceiver domain PsR) is not required for either interaction. 1 KaiB binds to one subunit of the KaiA homodimer. KaiA and CikA bind to the same region of the KaiB(fs) form and therefore compete.

Its function is as follows. Key component of the KaiABC oscillator complex, which constitutes the main circadian regulator in cyanobacteria. Complex composition changes during the circadian cycle to control KaiC phosphorylation. KaiA stimulates KaiC autophosphorylation, while KaiB sequesters KaiA, leading to KaiC autodephosphorylation. KaiA binding to the KaiC CII domain during the subjective day yields KaiA(2-4):KaiC(6) complexes which stimulate KaiC autophosphorylation. Phospho-Ser-431 KaiC accumulation triggers binding of KaiB during the subjective night to form the KaiB(6):KaiC(6) complex, leading to changes in the output regulators CikA and SasA. KaiB(6):KaiC(6) formation exposes a site for KaiA binding on KaiB that sequesters KaiA from KaiC's CII domain, making the KaiC(6):KaiB(6):KaiA(12) complex resulting in KaiC autodephosphorylation. Complete dephosphorylation of KaiC leads to dissociation of KaiA(2):KaiB(1), completing 1 cycle of the Kai oscillator. Formation of the KaiB:KaiC complex is promoted by KaiA, helping switch KaiC from its autophosphorylation to autodephosphatase function. Binds oxidized quinones via the N-terminal PsR domain, allowing it to sense redox changes and possibly mediate clock input. The protein is Circadian clock oscillator protein KaiA of Thermosynechococcus vestitus (strain NIES-2133 / IAM M-273 / BP-1).